Here is a 417-residue protein sequence, read N- to C-terminus: MLEQMGKAAKQASWQLAVLSTAKKNQVLSVIADKLEAESEVILQANEQDMEQARASGMSEALLDRLLLTPARLAAIANDVRQVCRLNDPVGHVLDGSLLDSGLKLERRRVPLGVIGVIYEARPNVTIDVASLCLKTGNAVILRGGKETHHTNQATVKVIQQALEQCGLPAAAVQAIESPDRALVNELLRLDRYVDMLIPRGGAGLHKLCREQSTIPVITGGIGVCHTYVDDSVDFDKALTVIENAKIQRPSACNSLETLLVNRNIAAEFLPALSSKMAVVGVTLHAAENAMPMLQDGPATVVAVAAEDYDDEWLSLDLNVALVDDIDQAIDHIRTHGTSHSDAILTRSLSSAEHFVRAVDSSAVYVNASTRFTDGGQFGLGAEVAVSTQKLHARGPMGLDALTTYKWIGYGDDLVRS.

This sequence belongs to the gamma-glutamyl phosphate reductase family.

The protein localises to the cytoplasm. The catalysed reaction is L-glutamate 5-semialdehyde + phosphate + NADP(+) = L-glutamyl 5-phosphate + NADPH + H(+). It functions in the pathway amino-acid biosynthesis; L-proline biosynthesis; L-glutamate 5-semialdehyde from L-glutamate: step 2/2. Its function is as follows. Catalyzes the NADPH-dependent reduction of L-glutamate 5-phosphate into L-glutamate 5-semialdehyde and phosphate. The product spontaneously undergoes cyclization to form 1-pyrroline-5-carboxylate. This is Gamma-glutamyl phosphate reductase from Serratia proteamaculans (strain 568).